Reading from the N-terminus, the 88-residue chain is Small ribosomal subunit protein bS20 (88 aa).

This sequence belongs to the bacterial ribosomal protein bS20 family.

Its function is as follows. Binds directly to 16S ribosomal RNA. The protein is Small ribosomal subunit protein bS20 of Bartonella henselae (strain ATCC 49882 / DSM 28221 / CCUG 30454 / Houston 1) (Rochalimaea henselae).